The chain runs to 671 residues: MESIEQQLTELRTTLRHHEYLYHVMDAPEIPDAEYDRLMRELRELETKHPELITPDSPTQRVGAAPLAAFSQIRHEVPMLSLDNVFDEESFLAFNKRVQDRLKNNEKVTWCCELKLDGLAVSILYENGVLVSAATRGDGTTGEDITSNVRTIRAIPLKLHGENIPARLEVRGEVFLPQAGFEKINEDARRTGGKVFANPRNAAAGSLRQLDPRITAKRPLTFFCYGVGVLEGGELPDTHLGRLLQFKKWGLPVSDRVTLCESAEEVLAFYHKVEEDRPTLGFDIDGVVIKVNSLEQQEQLGFVARAPRWAVAFKFPAQEQMTFVRDVEFQVGRTGAITPVARLEPVHVAGVLVSNATLHNADEIERLGLRIGDKVVIRRAGDVIPQVVNVVLSERPEDTREVVFPTHCPVCGSDVERVEGEAVARCTGGLICGAQRKESLKHFVSRRAMDVDGMGDKIIDQLVEKEYVHTPADLFKLTAGKLTGLERMGPKSAQNVVNALEKAKETTFARFLYALGIREVGEATAAGLAAYFGTLEVLEAASIEELQKVPDVGIVVASHVHNFFAEESNRNVISELLAEGVHWPAPIVINAEEIDSPFAGKTVVLTGSLSQMSRDDAKARLVELGAKVAGSVSKKTDLVIAGEAAGSKLAKAQELGIEVIDEAEMLRLLGS.

Residues 32-36 (DAEYD), 81-82 (SL), and glutamate 113 each bind NAD(+). Lysine 115 acts as the N6-AMP-lysine intermediate in catalysis. Arginine 136, glutamate 173, lysine 290, and lysine 314 together coordinate NAD(+). Cysteine 408, cysteine 411, cysteine 426, and cysteine 432 together coordinate Zn(2+). In terms of domain architecture, BRCT spans 593–671 (EIDSPFAGKT…EAEMLRLLGS (79 aa)).

Belongs to the NAD-dependent DNA ligase family. LigA subfamily. Requires Mg(2+) as cofactor. Mn(2+) is required as a cofactor.

The catalysed reaction is NAD(+) + (deoxyribonucleotide)n-3'-hydroxyl + 5'-phospho-(deoxyribonucleotide)m = (deoxyribonucleotide)n+m + AMP + beta-nicotinamide D-nucleotide.. Functionally, DNA ligase that catalyzes the formation of phosphodiester linkages between 5'-phosphoryl and 3'-hydroxyl groups in double-stranded DNA using NAD as a coenzyme and as the energy source for the reaction. It is essential for DNA replication and repair of damaged DNA. The protein is DNA ligase of Shigella sonnei (strain Ss046).